We begin with the raw amino-acid sequence, 367 residues long: Glutamate 5-kinase (367 aa).

Lys-9 contacts ATP. Substrate contacts are provided by Ser-49, Asp-136, and Asn-148. ATP contacts are provided by residues 168 to 169 (TD) and 210 to 216 (TGGMKSK). Residues 276–350 (SGQIEIDAGA…GMQSQHIQAR (75 aa)) enclose the PUA domain.

This sequence belongs to the glutamate 5-kinase family.

It is found in the cytoplasm. It carries out the reaction L-glutamate + ATP = L-glutamyl 5-phosphate + ADP. Its pathway is amino-acid biosynthesis; L-proline biosynthesis; L-glutamate 5-semialdehyde from L-glutamate: step 1/2. Functionally, catalyzes the transfer of a phosphate group to glutamate to form L-glutamate 5-phosphate. The polypeptide is Glutamate 5-kinase (Bacillus cereus (strain ZK / E33L)).